The chain runs to 76 residues: Mu-scoloptoxin(15)-Ssm1a (76 aa).

The signal sequence occupies residues 1 to 23 (MEKKIIFLVFLVALLALPGFIST). The interval 33–36 (KKRK) is important for inhibition of KCNQ4. Cystine bridges form between cysteine 43–cysteine 69 and cysteine 47–cysteine 71.

It belongs to the scoloptoxin-15 family. In terms of tissue distribution, expressed by the venom gland.

It localises to the secreted. Its function is as follows. Blocks voltage-gated potassium channels Kv7.4/KCNQ4 (IC(50)=2.5 uM), Kv7.1/KCNQ1 (IC(50)=2.8 uM), Kv7.2/KCNQ2 (IC(50)=2.7 uM) and Kv7.5/KCNQ5 (IC(50)=2.7 uM). Targets the pore domain, in particular negatively charged residues 'Asp-266' and 'Asp-288', of KCNQ4 and probably other KCNQ channel family members where these residues are conserved. In vivo, shows vasoconstrictive activity resulting in acute hypertension when injected intravenously in mice. Also induces coronary vasospasms ultimately leading to heart failure. Induces seizures when injected into the hippocampus of mice. Decreases respiratory rate while increasing respiratory amplitude, probably by triggering a contraction of the bronchial ring. This Scolopendra mutilans (Chinese red-headed centipede) protein is Mu-scoloptoxin(15)-Ssm1a.